The sequence spans 335 residues: Putative SWIB domain-containing protein R508 (335 aa).

Residues 1–12 are compositionally biased toward basic residues; the sequence is MSKRVTSSKKSK. Residues 1–182 are disordered; it reads MSKRVTSSKK…NKKSPKKLLN (182 aa). Low complexity predominate over residues 24–33; sequence KNLSKTSKSV. The segment covering 60-75 has biased composition (polar residues); that stretch reads NIGGSKSSRTYNSEGS. Positions 83 to 109 are enriched in basic and acidic residues; that stretch reads SSKDSKVIKKNKQKVESSDSEKHSENK. Residues 110-126 show a composition bias toward basic residues; the sequence is SHKKSSKSSSISRKKPI. The segment covering 163 to 173 has biased composition (basic and acidic residues); that stretch reads KGEDNNDEKQN. The stretch at 181 to 217 forms a coiled coil; the sequence is LNEKKISSESFDDKLNELREELRENYIRQKKIMNDIK. One can recognise an SWIB/MDM2 domain in the interval 244 to 326; it reads GFNKPQTVPQ…QTWLKKVYNE (83 aa).

The protein is Putative SWIB domain-containing protein R508 of Acanthamoeba polyphaga mimivirus (APMV).